We begin with the raw amino-acid sequence, 315 residues long: Deoxyribonuclease-1-like 1 (315 aa).

The signal sequence occupies residues Met1–Ala29. Residues Glu108 and His159 contribute to the active site. Residues Cys198 and Cys235 are joined by a disulfide bond. Asn272 carries N-linked (GlcNAc...) asparagine glycosylation.

The protein belongs to the DNase I family.

The protein resides in the endoplasmic reticulum. The protein is Deoxyribonuclease-1-like 1 (DNASE1L1) of Sus scrofa (Pig).